Here is a 587-residue protein sequence, read N- to C-terminus: Monocopper oxidase-like protein SKU5 (587 aa).

Positions 1-20 are cleaved as a signal peptide; it reads MDLFKILLLVFFVNISFCFA. Asn14 and Asn58 each carry an N-linked (GlcNAc...) asparagine glycan. His80 serves as a coordination point for Cu cation. Asn107, Asn169, Asn200, Asn257, Asn278, Asn293, Asn342, Asn362, Asn430, and Asn444 each carry an N-linked (GlcNAc...) asparagine glycan. His452 contacts Cu cation. N-linked (GlcNAc...) asparagine glycosylation occurs at Asn534. A lipid anchor (GPI-anchor amidated serine) is attached at Ser562. The propeptide at 563–587 is removed in mature form; that stretch reads ASKSIGFTSLSMVVMALVMMMMLQH.

Belongs to the multicopper oxidase family. Cu cation serves as cofactor. Expressed in roots, hypocotyls, cotyledons, leaves, stems and flowers.

It is found in the secreted. The protein resides in the cell wall. The protein localises to the cell membrane. Functionally, may be a monocopper oxidase of unknown specificity. Involved in directional growth processes, possibly by participating in cell wall expansion. The protein is Monocopper oxidase-like protein SKU5 (SKU5) of Arabidopsis thaliana (Mouse-ear cress).